A 436-amino-acid chain; its full sequence is EPS I polysaccharide export inner membrane protein EpsE (436 aa).

The next 12 helical transmembrane spans lie at 20 to 40, 49 to 69, 91 to 111, 132 to 152, 160 to 180, 184 to 204, 234 to 254, 261 to 281, 307 to 327, 341 to 361, 375 to 395, and 396 to 416; these read VLGL…NIML, FGLF…LATG, LCAF…ALYL, MAAI…FLYA, ASVS…MGPI, VVAL…QLVI, VLTT…LAAM, LALF…PATL, ALLF…LLAG, AAAS…SVLL, FAMA…ALRL, and GYGA…LILF.

To E.coli bicyclomycin resistance protein (BCR).

It is found in the cell inner membrane. Functionally, probably involved in polymerization and/or export of exopolysaccharide EPS I which functions as a virulence factor. May play a role in export of EPS I or its intermediates across the membranes. This chain is EPS I polysaccharide export inner membrane protein EpsE (epsE), found in Ralstonia nicotianae (strain ATCC BAA-1114 / GMI1000) (Ralstonia solanacearum).